The sequence spans 365 residues: Holliday junction branch migration complex subunit RuvB (365 aa).

Polar residues predominate over residues Met1 to Ser10. The interval Met1–Ser48 is disordered. Basic and acidic residues-rich tracts occupy residues Pro13–Pro23 and Arg31–Ser48. Positions Pro13–Tyr210 are large ATPase domain (RuvB-L). Positions 49, 50, 91, 94, 95, 96, 200, 210, and 247 each coordinate ATP. Thr95 serves as a coordination point for Mg(2+). Residues Gly211–Arg282 form a small ATPAse domain (RuvB-S) region. A head domain (RuvB-H) region spans residues Gly285–Ala365. Residues Arg340 and Arg345 each contribute to the DNA site.

This sequence belongs to the RuvB family. As to quaternary structure, homohexamer. Forms an RuvA(8)-RuvB(12)-Holliday junction (HJ) complex. HJ DNA is sandwiched between 2 RuvA tetramers; dsDNA enters through RuvA and exits via RuvB. An RuvB hexamer assembles on each DNA strand where it exits the tetramer. Each RuvB hexamer is contacted by two RuvA subunits (via domain III) on 2 adjacent RuvB subunits; this complex drives branch migration. In the full resolvosome a probable DNA-RuvA(4)-RuvB(12)-RuvC(2) complex forms which resolves the HJ.

The protein localises to the cytoplasm. The enzyme catalyses ATP + H2O = ADP + phosphate + H(+). The RuvA-RuvB-RuvC complex processes Holliday junction (HJ) DNA during genetic recombination and DNA repair, while the RuvA-RuvB complex plays an important role in the rescue of blocked DNA replication forks via replication fork reversal (RFR). RuvA specifically binds to HJ cruciform DNA, conferring on it an open structure. The RuvB hexamer acts as an ATP-dependent pump, pulling dsDNA into and through the RuvAB complex. RuvB forms 2 homohexamers on either side of HJ DNA bound by 1 or 2 RuvA tetramers; 4 subunits per hexamer contact DNA at a time. Coordinated motions by a converter formed by DNA-disengaged RuvB subunits stimulates ATP hydrolysis and nucleotide exchange. Immobilization of the converter enables RuvB to convert the ATP-contained energy into a lever motion, pulling 2 nucleotides of DNA out of the RuvA tetramer per ATP hydrolyzed, thus driving DNA branch migration. The RuvB motors rotate together with the DNA substrate, which together with the progressing nucleotide cycle form the mechanistic basis for DNA recombination by continuous HJ branch migration. Branch migration allows RuvC to scan DNA until it finds its consensus sequence, where it cleaves and resolves cruciform DNA. The chain is Holliday junction branch migration complex subunit RuvB from Synechococcus sp. (strain WH7803).